The chain runs to 526 residues: Exodeoxyribonuclease 7 large subunit (526 aa).

The segment at 497 to 526 is disordered; sequence AMTTEGGTPPGGAKKRSTKPAEPTKQGSLF.

Belongs to the XseA family. As to quaternary structure, heterooligomer composed of large and small subunits.

It localises to the cytoplasm. It catalyses the reaction Exonucleolytic cleavage in either 5'- to 3'- or 3'- to 5'-direction to yield nucleoside 5'-phosphates.. Its function is as follows. Bidirectionally degrades single-stranded DNA into large acid-insoluble oligonucleotides, which are then degraded further into small acid-soluble oligonucleotides. This Rhizobium etli (strain ATCC 51251 / DSM 11541 / JCM 21823 / NBRC 15573 / CFN 42) protein is Exodeoxyribonuclease 7 large subunit.